The following is a 186-amino-acid chain: Casparian strip membrane protein 3 (186 aa).

Over M1–S26 the chain is Cytoplasmic. A helical membrane pass occupies residues I27–M47. Topologically, residues G48–T74 are extracellular. The N-linked (GlcNAc...) asparagine glycan is linked to N51. Residues F75–I95 traverse the membrane as a helical segment. Over L96 to R107 the chain is Cytoplasmic. Residues I108 to A128 traverse the membrane as a helical segment. At S129 to S161 the chain is on the extracellular side. Residues L162–A182 traverse the membrane as a helical segment. The Cytoplasmic segment spans residues L183 to C186.

It belongs to the Casparian strip membrane proteins (CASP) family. In terms of assembly, homodimer and heterodimers.

Its subcellular location is the cell membrane. Functionally, regulates membrane-cell wall junctions and localized cell wall deposition. Required for establishment of the Casparian strip membrane domain (CSD) and the subsequent formation of Casparian strips, a cell wall modification of the root endodermis that determines an apoplastic barrier between the intraorganismal apoplasm and the extraorganismal apoplasm and prevents lateral diffusion. This chain is Casparian strip membrane protein 3, found in Vitis vinifera (Grape).